The following is a 360-amino-acid chain: Ribosomal RNA large subunit methyltransferase M (360 aa).

Residues Ser187, Cys220–Gly223, Asp239, Asp259, and Asp276 contribute to the S-adenosyl-L-methionine site. Lys305 serves as the catalytic Proton acceptor.

This sequence belongs to the class I-like SAM-binding methyltransferase superfamily. RNA methyltransferase RlmE family. RlmM subfamily. Monomer.

It localises to the cytoplasm. The enzyme catalyses cytidine(2498) in 23S rRNA + S-adenosyl-L-methionine = 2'-O-methylcytidine(2498) in 23S rRNA + S-adenosyl-L-homocysteine + H(+). In terms of biological role, catalyzes the 2'-O-methylation at nucleotide C2498 in 23S rRNA. In Shewanella sediminis (strain HAW-EB3), this protein is Ribosomal RNA large subunit methyltransferase M.